The sequence spans 77 residues: Large ribosomal subunit protein uL24 (77 aa).

Belongs to the universal ribosomal protein uL24 family. As to quaternary structure, part of the 50S ribosomal subunit.

One of two assembly initiator proteins, it binds directly to the 5'-end of the 23S rRNA, where it nucleates assembly of the 50S subunit. In terms of biological role, one of the proteins that surrounds the polypeptide exit tunnel on the outside of the subunit. The chain is Large ribosomal subunit protein uL24 from Campylobacter jejuni subsp. jejuni serotype O:6 (strain 81116 / NCTC 11828).